Consider the following 1365-residue polypeptide: Polyprotein ABA-1 (1365 aa).

This sequence belongs to the NPA family. Post-translationally, nematode polyprotein allergens (NPAs) are synthesized as large polypeptides that are subsequently proteolytically cleaved to active polypeptide units. As to expression, pseudocoelomic fluid.

Has high binding affinity for fatty acids and retinoids. In Ascaris suum (Pig roundworm), this protein is Polyprotein ABA-1 (ABA-1).